The sequence spans 422 residues: Imidazolonepropionase (422 aa).

His82 and His84 together coordinate Fe(3+). Zn(2+)-binding residues include His82 and His84. Residues Arg91, Tyr154, and His187 each contribute to the 4-imidazolone-5-propanoate site. Residue Tyr154 coordinates N-formimidoyl-L-glutamate. His252 is a binding site for Fe(3+). His252 lines the Zn(2+) pocket. A 4-imidazolone-5-propanoate-binding site is contributed by Glu255. Asp327 is a binding site for Fe(3+). Residue Asp327 coordinates Zn(2+). Positions 329 and 331 each coordinate N-formimidoyl-L-glutamate. Position 332 (Ser332) interacts with 4-imidazolone-5-propanoate.

Belongs to the metallo-dependent hydrolases superfamily. HutI family. Zn(2+) serves as cofactor. It depends on Fe(3+) as a cofactor.

Its subcellular location is the cytoplasm. The catalysed reaction is 4-imidazolone-5-propanoate + H2O = N-formimidoyl-L-glutamate. It participates in amino-acid degradation; L-histidine degradation into L-glutamate; N-formimidoyl-L-glutamate from L-histidine: step 3/3. Its function is as follows. Catalyzes the hydrolytic cleavage of the carbon-nitrogen bond in imidazolone-5-propanoate to yield N-formimidoyl-L-glutamate. It is the third step in the universal histidine degradation pathway. The protein is Imidazolonepropionase of Alkaliphilus metalliredigens (strain QYMF).